The following is a 467-amino-acid chain: Mothers against decapentaplegic homolog 2 (467 aa).

Ser2 is modified (N-acetylserine). Position 8 is a phosphothreonine (Thr8). The MH1 domain maps to 10–176 (PVVKRLLGWK…YQRVETPVLP (167 aa)). Lys19 bears the N6-acetyllysine mark. 4 residues coordinate Zn(2+): Cys74, Cys149, Cys161, and His166. Residues 207–217 (PAGIEPQSNYI) show a composition bias toward polar residues. The disordered stretch occupies residues 207–251 (PAGIEPQSNYIPETPPPGYISEDGETSDQQLNQSMDTGSPAELSP). Thr220 bears the Phosphothreonine mark. The PY-motif signature appears at 221–225 (PPPGY). Positions 233-243 (SDQQLNQSMDT) are enriched in polar residues. Ser240 carries the post-translational modification Phosphoserine; by CAMK2. Residues Ser245, Ser250, Ser255, Ser458, Ser460, and Ser464 each carry the phosphoserine modification. The MH2 domain maps to 274–467 (WCSIAYYELN…SPSVRCSSMS (194 aa)). Phosphoserine; by TGFBR1 is present on residues Ser465 and Ser467.

The protein belongs to the dwarfin/SMAD family. As to quaternary structure, monomer; in the absence of TGF-beta. Heterodimer; in the presence of TGF-beta. Forms a heterodimer with co-SMAD, SMAD4, in the nucleus to form the transactivation complex SMAD2/SMAD4. Found in a complex with SMAD3 and TRIM33 upon addition of TGF-beta. Identified in a complex that contains at least ZNF451, SMAD2, SMAD3 and SMAD4. Interacts (via the MH2 domain) with ZFYVE9; may form trimers with the SMAD4 co-SMAD. Interacts with TAZ/WWRT1. Interacts with FOXH1. Interacts with SNW1. Interacts with CREB-binding protein (CBP) and EP300. Interacts with SNON. Interacts with ALK4/ACVR1B. Interacts with SKOR1. Interacts with SKOR2. Interacts with PRDM16. Interacts (via MH2 domain) with LEMD3. Interacts with RBPMS. Interacts with WWP1. Interacts (dephosphorylated form, via the MH1 and MH2 domains) with RANBP3 (via its C-terminal R domain); the interaction results in the export of dephosphorylated SMAD3 out of the nucleus and termination of the TGF-beta signaling. Interacts with PDPK1 (via PH domain). Interacts with DAB2; the interactions are enhanced upon TGF-beta stimulation. Interacts with USP15. Interacts with PPP5C. Interacts with LDLRAD4 (via the SMAD interaction motif). Interacts (via MH2 domain) with PMEPA1 (via the SMAD interaction motif). Interacts with ZFHX3. Interacts with ZNF451. Interacts with SMURF2 when phosphorylated on Ser-465/467. Interacts with PPM1A. Interacts with TGF-beta. Interacts with TGFBR1. Interacts with TGIF. Interacts with SMAD3 and TRIM33. Interacts with ZNF580. Interacts with NEDD4L in response to TGF-beta. Interacts with HGS. Interacts with AIP1. Interacts with WWP1. Interacts with PML. Interacts weakly with ZNF8. Interacts (when phosphorylated) with RNF111; RNF111 acts as an enhancer of the transcriptional responses by mediating ubiquitination and degradation of SMAD2 inhibitors. Interacts with YAP1 (when phosphorylated at 'Ser-55'). Interacts when phosphorylated with IPO7; the interaction facilitates translocation of SMAD2 to the nucleus. Interacts with MTMR4; negatively regulates TGF-beta signaling through SMAD2 dephosphorylation and retention in endosomes. In terms of processing, in response to TGF-beta, phosphorylated on the C-terminal SXS motif by TGF-beta and activin type 1 receptor kinases, phosphorylation declines progressively in a KMT5A-dependent manner. Phosphorylation in this motif is required for interaction with a number of proteins including SMURF2, SNON and SMAD4 in response to TGF-beta. Dephosphorylated in this motif by PPM1A leading to disruption of the SMAD2/3-SMAD4 complex, nuclear export and termination of the TGF-beta signaling. In response to decorin, the naturally occurring inhibitor of TGF-beta signaling, phosphorylated on Ser-240 by CaMK2. Phosphorylated by MAPK3 upon EGF stimulation; which increases transcriptional activity and stability, and is blocked by calmodulin. Phosphorylated by PDPK1. Acetylated on Lys-19 by coactivators in response to TGF-beta signaling, which increases transcriptional activity. Post-translationally, in response to TGF-beta, ubiquitinated by NEDD4L; which promotes its degradation. Monoubiquitinated, leading to prevent DNA-binding. Deubiquitination by USP15 alleviates inhibition and promotes activation of TGF-beta target genes. Ubiquitinated by RNF111, leading to its degradation: only SMAD2 proteins that are 'in use' are targeted by RNF111, RNF111 playing a key role in activating SMAD2 and regulating its turnover.

It is found in the cytoplasm. Its subcellular location is the nucleus. Functionally, receptor-regulated SMAD (R-SMAD) that is an intracellular signal transducer and transcriptional modulator activated by TGF-beta (transforming growth factor) and activin type 1 receptor kinases. Binds the TRE element in the promoter region of many genes that are regulated by TGF-beta and, on formation of the SMAD2/SMAD4 complex, activates transcription. Promotes TGFB1-mediated transcription of odontoblastic differentiation genes in dental papilla cells. Positively regulates PDPK1 kinase activity by stimulating its dissociation from the 14-3-3 protein YWHAQ which acts as a negative regulator. This Bos taurus (Bovine) protein is Mothers against decapentaplegic homolog 2 (SMAD2).